Reading from the N-terminus, the 509-residue chain is Probable DNA ligase (509 aa).

Aspartate 218 contacts ATP. The active-site N6-AMP-lysine intermediate is lysine 220. ATP contacts are provided by arginine 225, arginine 240, glutamate 269, phenylalanine 302, arginine 374, and lysine 380.

This sequence belongs to the ATP-dependent DNA ligase family. The cofactor is Mg(2+).

The catalysed reaction is ATP + (deoxyribonucleotide)n-3'-hydroxyl + 5'-phospho-(deoxyribonucleotide)m = (deoxyribonucleotide)n+m + AMP + diphosphate.. Its function is as follows. DNA ligase that seals nicks in double-stranded DNA during DNA replication, DNA recombination and DNA repair. In Nocardioides sp. (strain ATCC BAA-499 / JS614), this protein is Probable DNA ligase.